Here is a 620-residue protein sequence, read N- to C-terminus: Mitochondrial Rho GTPase 2 (620 aa).

Over 1 to 594 (MRRDVRILLL…ELHPTSFWLR (594 aa)) the chain is Cytoplasmic. Residues 2–168 (RRDVRILLLG…FYYAQKAVLH (167 aa)) enclose the Miro 1 domain. The GTP site is built by glycine 16, lysine 17, threonine 18, and serine 19. A Mg(2+)-binding site is contributed by threonine 18. Residue aspartate 57 coordinates Mg(2+). Serine 59 is a GTP binding site. Lysine 96 is covalently cross-linked (Glycyl lysine isopeptide (Lys-Gly) (interchain with G-Cter in ubiquitin)). Asparagine 118, lysine 119, aspartate 121, alanine 149, and lysine 150 together coordinate GTP. Residue lysine 119 forms a Glycyl lysine isopeptide (Lys-Gly) (interchain with G-Cter in ubiquitin) linkage. A Glycyl lysine isopeptide (Lys-Gly) (interchain with G-Cter in ubiquitin) cross-link involves residue lysine 164. EF-hand domains lie at 184 to 219 (ACAQ…CFGH) and 304 to 339 (RGYQ…FSGA). Residues aspartate 197, aspartate 199, aspartate 201, glutamate 208, aspartate 317, aspartate 319, aspartate 321, and glutamate 328 each contribute to the Ca(2+) site. The Miro 2 domain occupies 415 to 578 (RSVLMCKVLG…FTQLATMATF (164 aa)). Residues glycine 427, glycine 429, lysine 430, serine 431, and alanine 432 each coordinate GTP. Serine 431 is a binding site for Mg(2+). Glutamate 473 contributes to the Mg(2+) binding site. Positions 527, 529, and 558 each coordinate GTP. The chain crosses the membrane as a helical; Anchor for type IV membrane protein span at residues 595-617 (GVLVAVGTAVAAVLSFSLYRVLV). Residues 618–620 (KSR) are Mitochondrial intermembrane-facing.

It belongs to the mitochondrial Rho GTPase family. In terms of assembly, homodimer. Interacts with the kinesin-binding proteins TRAK1/OIP106 and TRAK2/GRIF1, forming a link between mitochondria and the trafficking apparatus of the microtubules. Interacts with ARMCX3. Found in a complex with KIF5B, OGT, RHOT1 and TRAK1. In terms of processing, ubiquitinated by PRKN in a PINK1-dependent manner, leading to its degradation. In terms of tissue distribution, ubiquitously expressed.

The protein localises to the mitochondrion outer membrane. It catalyses the reaction GTP + H2O = GDP + phosphate + H(+). The catalysed reaction is ATP + H2O = ADP + phosphate + H(+). The enzyme catalyses UTP + H2O = UDP + phosphate + H(+). Functionally, atypical mitochondrial nucleoside-triphosphatase (NTPase) involved in mitochondrial trafficking. Probably involved in control of anterograde transport of mitochondria and their subcellular distribution. Can hydrolyze GTP, ATP and UTP. The sequence is that of Mitochondrial Rho GTPase 2 (Rhot2) from Mus musculus (Mouse).